The sequence spans 114 residues: UPF0342 protein lp_1415 (114 aa).

It belongs to the UPF0342 family.

The sequence is that of UPF0342 protein lp_1415 from Lactiplantibacillus plantarum (strain ATCC BAA-793 / NCIMB 8826 / WCFS1) (Lactobacillus plantarum).